We begin with the raw amino-acid sequence, 440 residues long: Chromosome partition protein MukF (440 aa).

Positions 208-236 (LSETSGTLRELQDTLEAAGDKLQANLLRI) are leucine-zipper.

It belongs to the MukF family. Interacts, and probably forms a ternary complex, with MukE and MukB via its C-terminal region. The complex formation is stimulated by calcium or magnesium. It is required for an interaction between MukE and MukB.

Its subcellular location is the cytoplasm. It is found in the nucleoid. Functionally, involved in chromosome condensation, segregation and cell cycle progression. May participate in facilitating chromosome segregation by condensation DNA from both sides of a centrally located replisome during cell division. Not required for mini-F plasmid partitioning. Probably acts via its interaction with MukB and MukE. Overexpression results in anucleate cells. It has a calcium binding activity. This is Chromosome partition protein MukF from Escherichia coli (strain ATCC 8739 / DSM 1576 / NBRC 3972 / NCIMB 8545 / WDCM 00012 / Crooks).